Reading from the N-terminus, the 87-residue chain is UPF0235 protein TGRD_618 (87 aa).

It belongs to the UPF0235 family.

In Endomicrobium trichonymphae, this protein is UPF0235 protein TGRD_618.